Here is a 213-residue protein sequence, read N- to C-terminus: Probable nicotinate-nucleotide adenylyltransferase (213 aa).

Belongs to the NadD family.

It carries out the reaction nicotinate beta-D-ribonucleotide + ATP + H(+) = deamido-NAD(+) + diphosphate. Its pathway is cofactor biosynthesis; NAD(+) biosynthesis; deamido-NAD(+) from nicotinate D-ribonucleotide: step 1/1. Its function is as follows. Catalyzes the reversible adenylation of nicotinate mononucleotide (NaMN) to nicotinic acid adenine dinucleotide (NaAD). The protein is Probable nicotinate-nucleotide adenylyltransferase of Escherichia coli O45:K1 (strain S88 / ExPEC).